Consider the following 542-residue polypeptide: uncharacterized protein (542 aa).

5 helical membrane-spanning segments follow: residues 4–23 (ILRD…GYPL), 28–47 (IGGI…AFGA), 57–79 (IVYQ…HGFL), 86–108 (GVIY…LIPH), and 151–173 (PVVG…IYLA). 2 consecutive RCK C-terminal domains span residues 186-270 (RTLK…VIGC) and 273-356 (EVQA…LGDS). Transmembrane regions (helical) follow at residues 365 to 384 (IAVL…VPIP), 389 to 408 (ITVR…FLGA), 415 to 437 (LVWV…IFLA), 457 to 479 (WAIL…YVGY), 484 to 506 (IPMG…LGFA), and 519 to 541 (YAMV…IAVL).

This sequence belongs to the AAE transporter (TC 2.A.81) family.

It is found in the cell membrane. This is an uncharacterized protein from Symbiobacterium thermophilum (strain DSM 24528 / JCM 14929 / IAM 14863 / T).